We begin with the raw amino-acid sequence, 391 residues long: MAGVKERAVLVLEDGTVYHGYAFGARGKTVGEVVFNTAQTGYQEIMTDPSYHGQIVVMTYPHQGNYGVNVYDMQSNRPWVRGFVAKEFSRVASNPRAQQTIGEFMEFYGVVGIEGIDTRALVRKIREGGVLKGTIAHASLFGAPDHAFTQEELEALRREAQAWTDIDGRDMTPEVSTPLPYAWPTLKSGRRIVVMDFGIKHAIVENLAALGFEVIVVPGKTPAHQIMALEPHGLLISNGPGDPTMPRYAHETIWKLMGLLPTFGICLGHQLLALAAGGRTFKMKFGHRGANHPVKNLQTGKIEITSQNHGYAVDIDSLKDFRPTHVNLNDGTLEGMAHARYPVFSVQYHPEAAPGPHDALYLFRRFLEEVEAFHGATGLPVEKQRADQHGI.

Residues M1–K187 form a CPSase region. Positions 50, 239, and 241 each coordinate L-glutamine. Residues R191–A376 form the Glutamine amidotransferase type-1 domain. C266 functions as the Nucleophile in the catalytic mechanism. 5 residues coordinate L-glutamine: L267, Q270, N308, G310, and Y311. Active-site residues include H349 and E351.

It belongs to the CarA family. As to quaternary structure, composed of two chains; the small (or glutamine) chain promotes the hydrolysis of glutamine to ammonia, which is used by the large (or ammonia) chain to synthesize carbamoyl phosphate. Tetramer of heterodimers (alpha,beta)4.

The catalysed reaction is hydrogencarbonate + L-glutamine + 2 ATP + H2O = carbamoyl phosphate + L-glutamate + 2 ADP + phosphate + 2 H(+). It catalyses the reaction L-glutamine + H2O = L-glutamate + NH4(+). Its pathway is amino-acid biosynthesis; L-arginine biosynthesis; carbamoyl phosphate from bicarbonate: step 1/1. The protein operates within pyrimidine metabolism; UMP biosynthesis via de novo pathway; (S)-dihydroorotate from bicarbonate: step 1/3. Its function is as follows. Small subunit of the glutamine-dependent carbamoyl phosphate synthetase (CPSase). CPSase catalyzes the formation of carbamoyl phosphate from the ammonia moiety of glutamine, carbonate, and phosphate donated by ATP, constituting the first step of 2 biosynthetic pathways, one leading to arginine and/or urea and the other to pyrimidine nucleotides. The small subunit (glutamine amidotransferase) binds and cleaves glutamine to supply the large subunit with the substrate ammonia. This chain is Carbamoyl phosphate synthase small chain, found in Thermus thermophilus (strain ATCC BAA-163 / DSM 7039 / HB27).